The chain runs to 293 residues: 4-diphosphocytidyl-2-C-methyl-D-erythritol kinase (293 aa).

The active site involves Lys-10. Position 96-106 (96-106 (PVASGIGGGSS)) interacts with ATP. Asp-138 is an active-site residue.

This sequence belongs to the GHMP kinase family. IspE subfamily.

The catalysed reaction is 4-CDP-2-C-methyl-D-erythritol + ATP = 4-CDP-2-C-methyl-D-erythritol 2-phosphate + ADP + H(+). The protein operates within isoprenoid biosynthesis; isopentenyl diphosphate biosynthesis via DXP pathway; isopentenyl diphosphate from 1-deoxy-D-xylulose 5-phosphate: step 3/6. Catalyzes the phosphorylation of the position 2 hydroxy group of 4-diphosphocytidyl-2C-methyl-D-erythritol. This Chelativorans sp. (strain BNC1) protein is 4-diphosphocytidyl-2-C-methyl-D-erythritol kinase.